Here is a 428-residue protein sequence, read N- to C-terminus: MLDLRLLRENPEATQARLDRRHSSYDIQPLLSLDQQVRQWEQERTQLQARSNEIGRSVGQKMREGADPQSEEIAALREEGNQLKQQIADLEQQERQVRSELDTYLLTLPNLPDETVPLGSSEDENREIHRWGDDRIREGEFAPHWEIGERLGLFDFERSTRIAQSRFVTLLGAGAALERALIAFMLDRQTAAGYTEVAPPYLINSASLTASGQLPKFSEESFRCDRDDLWLTPTAEVPLTSLYRDEILSADQLPLRYCAYTPCFRREAGSYGRDTRGLIRLHQFNKVELYQFVHPDHSEAAHQQLLANAEAILQALELPYRTIELCTGDLGFSAQKTYDIEVWLPSAGRYREISSCSNCGDFQARRANIRFKEAGQKGTRFVHTLNGSGLAVGRTMAAVLENYQQPDGSVRVPEALQPYLRQTVIGQP.

234–236 (TAE) contacts L-serine. ATP is bound at residue 265–267 (RRE). Position 288 (Glu-288) interacts with L-serine. Residue 352–355 (EISS) coordinates ATP. Ser-388 is a binding site for L-serine.

This sequence belongs to the class-II aminoacyl-tRNA synthetase family. Type-1 seryl-tRNA synthetase subfamily. Homodimer. The tRNA molecule binds across the dimer.

The protein localises to the cytoplasm. The catalysed reaction is tRNA(Ser) + L-serine + ATP = L-seryl-tRNA(Ser) + AMP + diphosphate + H(+). It catalyses the reaction tRNA(Sec) + L-serine + ATP = L-seryl-tRNA(Sec) + AMP + diphosphate + H(+). The protein operates within aminoacyl-tRNA biosynthesis; selenocysteinyl-tRNA(Sec) biosynthesis; L-seryl-tRNA(Sec) from L-serine and tRNA(Sec): step 1/1. Functionally, catalyzes the attachment of serine to tRNA(Ser). Is also able to aminoacylate tRNA(Sec) with serine, to form the misacylated tRNA L-seryl-tRNA(Sec), which will be further converted into selenocysteinyl-tRNA(Sec). The sequence is that of Serine--tRNA ligase from Synechococcus elongatus (strain ATCC 33912 / PCC 7942 / FACHB-805) (Anacystis nidulans R2).